Consider the following 2531-residue polypeptide: Mediator of RNA polymerase II transcription subunit 12 (2531 aa).

Disordered stretches follow at residues 1-41 (MLSM…VKHG), 204-283 (QNHD…GSVM), 584-604 (VSRR…PKQD), and 742-762 (TTAT…THGF). Residues 210–247 (SSNGTTSGSLTAAGNGPASNGSTGTSSINSVTGSSAST) show a composition bias toward low complexity. Residues 586 to 604 (RRREEDQVEPRPPYEPKQD) show a composition bias toward basic and acidic residues. Phosphothreonine is present on Thr745. Phosphoserine is present on residues Ser748 and Ser781. Over residues 748–757 (SPPPPAPPPT) the composition is skewed to pro residues. Residues 796-805 (EKGQQHEAPD) are compositionally biased toward basic and acidic residues. The segment at 796 to 824 (EKGQQHEAPDSPKIGPPGDGETNPGGSIS) is disordered. A phosphoserine mark is found at Ser806 and Ser1356. The residue at position 1360 (Thr1360) is a Phosphothreonine. Composition is skewed to polar residues over residues 1585–1595 (VSKSDCNSSGS) and 1901–1910 (TPSSVDQSPS). Disordered regions lie at residues 1585-1608 (VSKS…CHSS), 1898-2092 (KADT…NQYA), 2114-2218 (QALS…GMAP), and 2469-2508 (MGGG…QQQT). The span at 1919 to 1933 (GRGKGTTTRKRKPKN) shows a compositional bias: basic residues. Composition is skewed to low complexity over residues 1938–2038 (PVVN…QQLN) and 2045–2055 (QPNPQMNFMQQ). Residues 2056–2066 (GPGGGGAGPQG) are compositionally biased toward gly residues. Composition is skewed to low complexity over residues 2067-2080 (MPGQ…APQQ), 2121-2132 (RQRQPFQQQAQQ), and 2139-2205 (NPMQ…QQQQ). The segment covering 2469–2496 (MGGGAGGGMGAGPQQGGGAVGGGAGGGM) has biased composition (gly residues). Positions 2497–2507 (VPQQQSMNQQQ) are enriched in low complexity.

The protein belongs to the Mediator complex subunit 12 family. As to quaternary structure, component of the Cdk8 module of the Mediator complex, composed of CycC, Cdk8, kto and skd.

The protein resides in the nucleus. Functionally, component of the Mediator complex, a coactivator involved in regulated gene transcription of nearly all RNA polymerase II-dependent genes. Mediator functions as a bridge to convey information from gene-specific regulatory proteins to the basal RNA polymerase II transcription machinery. Mediator is recruited to promoters by direct interactions with regulatory proteins and serves as a scaffold for the assembly of a functional preinitiation complex with RNA polymerase II and the general transcription factors. Required for leg and eye development and macrochaete specification or differentiation. In Drosophila melanogaster (Fruit fly), this protein is Mediator of RNA polymerase II transcription subunit 12 (kto).